The primary structure comprises 321 residues: Cytochrome c biogenesis protein CcsA (321 aa).

A run of 6 helical transmembrane segments spans residues 17-37 (IISIVITIQLIDLLVYQIVGI), 43-63 (KGIIATFFCITGLLITRWIYS), 143-163 (MLLSYAALLCGALLSVAFLVI), 225-245 (VISLGFIFSTIGILSGAVWAN), 258-275 (ETWAFITWTIFAIYLHTR), and 287-307 (IVASIGFLIIWICYFGVNLLG).

It belongs to the CcmF/CycK/Ccl1/NrfE/CcsA family. As to quaternary structure, may interact with Ccs1.

It localises to the plastid. The protein resides in the chloroplast thylakoid membrane. Its function is as follows. Required during biogenesis of c-type cytochromes (cytochrome c6 and cytochrome f) at the step of heme attachment. In Drimys granadensis, this protein is Cytochrome c biogenesis protein CcsA.